Here is an 866-residue protein sequence, read N- to C-terminus: Leucine--tRNA ligase (866 aa).

The 'HIGH' region signature appears at 42 to 52; that stretch reads PYPSGKLHMGH. The short motif at 624–628 is the 'KMSKS' region element; the sequence is TMSKS. Position 627 (lysine 627) interacts with ATP.

The protein belongs to the class-I aminoacyl-tRNA synthetase family.

The protein localises to the cytoplasm. It catalyses the reaction tRNA(Leu) + L-leucine + ATP = L-leucyl-tRNA(Leu) + AMP + diphosphate. This chain is Leucine--tRNA ligase, found in Nitrosospira multiformis (strain ATCC 25196 / NCIMB 11849 / C 71).